Reading from the N-terminus, the 134-residue chain is Histone H2A (134 aa).

Residues 1-10 (MTGGKSGGKA) are compositionally biased toward gly residues. The disordered stretch occupies residues 1 to 24 (MTGGKSGGKASGSKNAQSRSSKAG). N6-acetyllysine occurs at positions 5 and 9. At Q106 the chain carries N5-methylglutamine. Positions 115–134 (QNLLPKKTPKSGKGPGSQEL) are disordered. S131 bears the Phosphoserine mark. A [ST]-Q motif motif is present at residues 131–132 (SQ).

The protein belongs to the histone H2A family. As to quaternary structure, the nucleosome is a histone octamer containing two molecules each of H2A, H2B, H3 and H4 assembled in one H3-H4 heterotetramer and two H2A-H2B heterodimers. The octamer wraps approximately 147 bp of DNA. In terms of processing, phosphorylated to form H2AS128ph (gamma-H2A) in response to DNA double-strand breaks (DSBs) generated by exogenous genotoxic agents and by stalled replication forks. Phosphorylation is dependent on the DNA damage checkpoint kinases mec1/ATR and tel1/ATM, spreads on either side of a detected DSB site and may mark the surrounding chromatin for recruitment of proteins required for DNA damage signaling and repair. Gamma-H2A is removed from the DNA prior to the strand invasion-primer extension step of the repair process and subsequently dephosphorylated. Dephosphorylation is necessary for efficient recovery from the DNA damage checkpoint. Acetylated by esa1 to form H2AK4ac and H2AK7ac.

It localises to the nucleus. It is found in the chromosome. Its function is as follows. Core component of nucleosome which plays a central role in DNA double strand break (DSB) repair. Nucleosomes wrap and compact DNA into chromatin, limiting DNA accessibility to the cellular machineries which require DNA as a template. Histones thereby play a central role in transcription regulation, DNA repair, DNA replication and chromosomal stability. DNA accessibility is regulated via a complex set of post-translational modifications of histones, also called histone code, and nucleosome remodeling. This Aspergillus niger (strain ATCC MYA-4892 / CBS 513.88 / FGSC A1513) protein is Histone H2A (httA).